Consider the following 245-residue polypeptide: NADH-quinone oxidoreductase subunit C (245 aa).

Over residues 1–10 the composition is skewed to basic and acidic residues; the sequence is MSAPQDRTDD. Disordered regions lie at residues 1 to 54 and 216 to 245; these read MSAP…GYGG and PQRKDYPLGGVPVEYKGAEIPPPDRRRSYQ. A compositionally biased stretch (low complexity) spans 11 to 28; that stretch reads GGVPVPVTPAGATGGAPA. Gly residues predominate over residues 39–54; that stretch reads GMFGDQGTGDVSGYGG.

This sequence belongs to the complex I 30 kDa subunit family. As to quaternary structure, NDH-1 is composed of 14 different subunits. Subunits NuoB, C, D, E, F, and G constitute the peripheral sector of the complex.

The protein localises to the cell membrane. It catalyses the reaction a quinone + NADH + 5 H(+)(in) = a quinol + NAD(+) + 4 H(+)(out). NDH-1 shuttles electrons from NADH, via FMN and iron-sulfur (Fe-S) centers, to quinones in the respiratory chain. The immediate electron acceptor for the enzyme in this species is believed to be a menaquinone. Couples the redox reaction to proton translocation (for every two electrons transferred, four hydrogen ions are translocated across the cytoplasmic membrane), and thus conserves the redox energy in a proton gradient. The chain is NADH-quinone oxidoreductase subunit C from Salinispora tropica (strain ATCC BAA-916 / DSM 44818 / JCM 13857 / NBRC 105044 / CNB-440).